The sequence spans 482 residues: Histone deacetylase 1 (482 aa).

The histone deacetylase stretch occupies residues 9-321 (RKVCYYYDGD…WTYETAVALD (313 aa)). 1D-myo-inositol 1,4,5,6-tetrakisphosphate-binding residues include Gly-27 and Lys-31. Position 74 is an N6-acetyllysine; alternate (Lys-74). Lys-74 is covalently cross-linked (Glycyl lysine isopeptide (Lys-Gly) (interchain with G-Cter in SUMO2); alternate). Residue His-141 is part of the active site. Zn(2+)-binding residues include Asp-176 and His-178. Lys-220 is subject to N6-acetyllysine. Cys-261 bears the S-nitrosocysteine mark. Zn(2+) is bound at residue Asp-264. Arg-270 is a binding site for 1D-myo-inositol 1,4,5,6-tetrakisphosphate. Cys-273 is subject to S-nitrosocysteine. The span at 390–400 (PEESGDEDEED) shows a compositional bias: acidic residues. Residues 390–482 (PEESGDEDEE…KGVKEEVKMA (93 aa)) form a disordered region. Phosphoserine occurs at positions 393, 406, 409, 421, and 423. Over residues 401–416 (PDKRISICSSDKRIAC) the composition is skewed to basic and acidic residues. Positions 417–427 (EEEFSDSDEEG) are enriched in acidic residues. Lys-432 is subject to N6-methylated lysine; by EHMT2. Lys-438 is covalently cross-linked (Glycyl lysine isopeptide (Lys-Gly) (interchain with G-Cter in SUMO2)). Residues 443–482 (VKTEDEKEKDPEEKKEVTEEEKTKEEKPEAKGVKEEVKMA) show a composition bias toward basic and acidic residues. Lys-444 is covalently cross-linked (Glycyl lysine isopeptide (Lys-Gly) (interchain with G-Cter in SUMO2); alternate). A Glycyl lysine isopeptide (Lys-Gly) (interchain with G-Cter in SUMO); alternate cross-link involves residue Lys-444. Residues Lys-456, Lys-457, and Lys-473 each participate in a glycyl lysine isopeptide (Lys-Gly) (interchain with G-Cter in SUMO2) cross-link. Lys-476 is covalently cross-linked (Glycyl lysine isopeptide (Lys-Gly) (interchain with G-Cter in SUMO2); alternate). A Glycyl lysine isopeptide (Lys-Gly) (interchain with G-Cter in SUMO); alternate cross-link involves residue Lys-476. A Glycyl lysine isopeptide (Lys-Gly) (interchain with G-Cter in SUMO2) cross-link involves residue Lys-480.

It belongs to the histone deacetylase family. HD type 1 subfamily. Part of the core histone deacetylase (HDAC) complex composed of HDAC1, HDAC2, RBBP4 and RBBP7, the core complex associates with SIN3, SAP18 and SAP30 to form the SIN3 HDAC complex. Component of the nucleosome remodeling and deacetylase (NuRD) repressor complex, composed of core proteins MTA1, MTA2, MTA3, RBBP4, RBBP7, HDAC1, HDAC2, MBD2, MBD3, and peripherally associated proteins CDK2AP1, CDK2AP2, GATAD2A, GATAD2B, CHD3, CHD4 and CHD5. The exact stoichiometry of the NuRD complex is unknown, and some subunits such as MBD2 and MBD3, GATAD2A and GATAD2B, and CHD3, CHD4 and CHD5 define mutually exclusive NuRD complexes. Component of a BHC histone deacetylase complex that contains HDAC1, HDAC2, HMG20B/BRAF35, KDM1A, RCOR1/CoREST and PHF21A/BHC80. The BHC complex may also contain ZMYM2, ZNF217, ZMYM3, GSE1 and GTF2I. Component of a mSin3A corepressor complex that contains SIN3A, SAP130, SUDS3/SAP45, ARID4B/SAP180, HDAC1 and HDAC2. Found in a trimeric complex with APBB1 and TSHZ3; the interaction between HDAC1 and APBB1 is mediated by TSHZ3. Forms a complex comprising APPL1, RUVBL2, APPL2, CTNNB1 and HDAC2. Component of a RCOR/GFI/KDM1A/HDAC complex. Part of a complex composed of TRIM28, HDAC1, HDAC2 and EHMT2. Part of a complex containing at least CDYL, MIER1, MIER2, HDAC1 and HDAC2. The large PER complex involved in the histone deacetylation is composed of at least HDAC1, PER2, SFPQ and SIN3A. Associates with the 9-1-1 complex; interacts with HUS1. Found in a complex with DNMT3A and HDAC7. Found in a complex with YY1, SIN3A and GON4L. Identified in a histone deacetylase complex that contains DNTTIP1, HDAC1 and MIDEAS; this complex assembles into a tetramer that contains four copies of each protein chain. Found in a complex composed of at least SINHCAF, SIN3A, HDAC1, SAP30, RBBP4, OGT and TET1. Component of the SIN3B complex, which includes SIN3B, HDAC1, PHF12 and MORF4L1. Interacts with GFI1; the interaction is direct. Interacts directly with GFI1B. Interacts with TSHZ3 (via N-terminus); the interaction is direct. Interacts with APEX1; the interaction is not dependent on the acetylated status of APEX1. Interacts with BANP. Interacts with BAZ2A/TIP5. Interacts with BCL6. Interacts with BCOR. Interacts with BHLHE40/DEC1. Interacts with BRCC3; this interaction is enhanced in the presence of PWWP2B. Interacts with BRMS1. Interacts with BRMS1L. Interacts with C10orf90/FATS (via its N-terminal); the interaction prevents binding of HDAC1 to CDKN1A/p21 and facilitates the acetylation and stabilization of CDKN1A/p21. Interacts with CBFA2T3. Interacts with CCAR2. Interacts with CDK2AP1. Interacts with CHD3. Interacts with CHD4. Interacts with CHFR. Interacts with CIART. Interacts with CDKN1A/p21. Interacts with CDK5 complexed to CDK5R1 (p25). Interacts with CRY1. Interacts with DAXX. Interacts with DDIT3/CHOP. Interacts with DDX5. Interacts with DHX36; this interaction occurs in a RNA-dependent manner. Interacts with DNMT1. Interacts with DNTTIP1. Interacts with E4F1. Interacts with EP300. Interacts with ERCC6. Interacts with GATAD2A. Interacts with HCFC1. Interacts with HDAC9. Interacts with HUS1. Interacts with INSM1. Interacts with KDM4A. Interacts with KDM5A; this interaction impairs histone deacetylation. Interacts with KDM5B. Interacts with KLF1. Interacts with MBD3L2. Interacts with MIER1. Interacts with NFE4. Interacts with NR4A2/NURR1. Interacts with NR1D2 (via C-terminus). Interacts with NRIP1. Interacts with NSD2. Interacts with PACS2. Interacts with PHB2. Interacts with PPHLN1. Interacts with PRDM6. Interacts with PRDM16. Interacts with PWWP2A in a MTA1-dependent manner. Interacts with PWWP2B. Interacts with RB1. Interacts with RERE. Interacts with SANBR (via the BTB domain). Interacts with SAMSN1. Interacts with SAP30L. Interacts with SETDB1. Interacts with SIN3A. Interacts with SMAD3. Interacts with SMAD4; positively regulated by ZBTB7A. Interacts with SMARCAD1. Interacts with SMARCA4/BRG1. Interacts with SMYD2. Interacts with SMYD4 (via MYND-type zinc finger). Interacts with SP1; the interaction deacetylates SP1 and regulates its transcriptional activity. Interacts with SP3; the interaction deacetylates SP3 and regulates its transcriptional activity. In vitro, C(18) ceramides increase this interaction and the subsequent SP3 deacetylation and SP3-mediated repression of the TERT promoter. Interacts with SPEN/MINT. Interacts with SPHK2. Interacts with SUV39H1. Interacts with TGIF. Interacts with TGIF2. Interacts with TRAF6. Interacts with TRIM28; the interaction recruits HDAC1 to E2F1 and inhibits its acetylation. Interacts with TSC22D3 isoform 1; this interaction affects HDAC1 activity on MYOG promoter and thus inhibits MYOD1 transcriptional activity. Interacts with UHRF1. Interacts with UHRF2. Interacts with ZBTB7A. Interacts with ZMYND8. Interacts with ZMYND15. Interacts with ZNF431. Interacts with ZNF516; this interaction is enhanced in the presence of PWWP2B. Interacts with ZNF541. Interacts with ZNF638. Interacts with ZNHIT1. Interacts with the non-histone region of MACROH2A1. Identified in a complex with HDAC2, KCTD19, DNTTIP1 and ZNF541. Interacts with MSX3. Interacts with VRK1. Requires Zn(2+) as cofactor. In terms of processing, sumoylated on Lys-444 and Lys-476; which promotes enzymatic activity. Desumoylated by SENP1. Phosphorylation on Ser-421 and Ser-423 promotes enzymatic activity and interactions with NuRD and SIN3 complexes. Phosphorylated by CDK5. Post-translationally, ubiquitinated by CHFR and KCTD11, leading to its degradation by the proteasome.

Its subcellular location is the nucleus. The catalysed reaction is N(6)-acetyl-L-lysyl-[histone] + H2O = L-lysyl-[histone] + acetate. It carries out the reaction N(6)-acetyl-L-lysyl-[protein] + H2O = L-lysyl-[protein] + acetate. The enzyme catalyses N(6)-(2E)-butenoyl-L-lysyl-[protein] + H2O = (2E)-2-butenoate + L-lysyl-[protein]. It catalyses the reaction N(6)-[(S)-lactoyl]-L-lysyl-[protein] + H2O = (S)-lactate + L-lysyl-[protein]. Inositol tetraphosphate (1D-myo-inositol 1,4,5,6-tetrakisphosphate) may act as an intermolecular glue between HDAC1 and N-Cor repressor complex components. Functionally, histone deacetylase that catalyzes the deacetylation of lysine residues on the N-terminal part of the core histones (H2A, H2B, H3 and H4). Histone deacetylation gives a tag for epigenetic repression and plays an important role in transcriptional regulation, cell cycle progression and developmental events. Histone deacetylases act via the formation of large multiprotein complexes. Acts as a component of the histone deacetylase NuRD complex which participates in the remodeling of chromatin. As part of the SIN3B complex is recruited downstream of the constitutively active genes transcriptional start sites through interaction with histones and mitigates histone acetylation and RNA polymerase II progression within transcribed regions contributing to the regulation of transcription. Also functions as a deacetylase for non-histone targets, such as NR1D2, RELA, SP1, SP3, STAT3 and TSHZ3. Deacetylates SP proteins, SP1 and SP3, and regulates their function. Component of the BRG1-RB1-HDAC1 complex, which negatively regulates the CREST-mediated transcription in resting neurons. Upon calcium stimulation, HDAC1 is released from the complex and CREBBP is recruited, which facilitates transcriptional activation. Deacetylates TSHZ3 and regulates its transcriptional repressor activity. Deacetylates 'Lys-310' in RELA and thereby inhibits the transcriptional activity of NF-kappa-B. Deacetylates NR1D2 and abrogates the effect of KAT5-mediated relieving of NR1D2 transcription repression activity. Component of a RCOR/GFI/KDM1A/HDAC complex that suppresses, via histone deacetylase (HDAC) recruitment, a number of genes implicated in multilineage blood cell development. Involved in CIART-mediated transcriptional repression of the circadian transcriptional activator: CLOCK-BMAL1 heterodimer. Required for the transcriptional repression of circadian target genes, such as PER1, mediated by the large PER complex or CRY1 through histone deacetylation. In addition to protein deacetylase activity, also has protein-lysine deacylase activity: acts as a protein decrotonylase and delactylase by mediating decrotonylation ((2E)-butenoyl) and delactylation (lactoyl) of histones, respectively. The sequence is that of Histone deacetylase 1 (Hdac1) from Rattus norvegicus (Rat).